We begin with the raw amino-acid sequence, 345 residues long: IGF-like family receptor 1 (345 aa).

The N-terminal stretch at 1 to 20 (MGPSWLLWTVAVAVLLLTRA) is a signal peptide. Residues 21–163 (ASMEASSFCG…SSRPGFVSAS (143 aa)) lie on the Extracellular side of the membrane. Asn-87 carries an N-linked (GlcNAc...) asparagine glycan. The interval 106–149 (VESPGRTHKQCRKKPVPPKDVCPLKPEDAGASSSPGRWSLGQTT) is disordered. Residues 111–121 (RTHKQCRKKPV) show a composition bias toward basic residues. The segment covering 136 to 149 (ASSSPGRWSLGQTT) has biased composition (polar residues). Residues 164 to 184 (VLPLAVLPLLLVLLLILAVVL) form a helical membrane-spanning segment. At 185–345 (LSLFKRKVRS…DALQVLSKLG (161 aa)) the chain is on the cytoplasmic side.

Ubiquitously expressed with higher expression in lymph node. Highly expressed in T-cells and monocytes.

Its subcellular location is the cell membrane. Functionally, probable cell membrane receptor for the IGF-like family protein IGFL. In Mus musculus (Mouse), this protein is IGF-like family receptor 1 (Igflr1).